Reading from the N-terminus, the 163-residue chain is Nucleotide-binding protein ROP_16630 (163 aa).

It belongs to the YajQ family.

In terms of biological role, nucleotide-binding protein. In Rhodococcus opacus (strain B4), this protein is Nucleotide-binding protein ROP_16630.